A 623-amino-acid chain; its full sequence is uncharacterized protein (623 aa).

Residues Ala256 to Asn351 adopt a coiled-coil conformation. Disordered regions lie at residues Asn417–Ser485 and Ala497–Thr536. Positions Leu422–Ser431 are enriched in polar residues. Residues Glu452–Lys481 show a composition bias toward basic and acidic residues.

This is an uncharacterized protein from Arabidopsis thaliana (Mouse-ear cress).